A 213-amino-acid polypeptide reads, in one-letter code: Large ribosomal subunit protein uL3 (213 aa).

The interval Gly131–Asp168 is disordered.

Belongs to the universal ribosomal protein uL3 family. In terms of assembly, part of the 50S ribosomal subunit. Forms a cluster with proteins L14 and L19.

One of the primary rRNA binding proteins, it binds directly near the 3'-end of the 23S rRNA, where it nucleates assembly of the 50S subunit. In Synechococcus elongatus (strain ATCC 33912 / PCC 7942 / FACHB-805) (Anacystis nidulans R2), this protein is Large ribosomal subunit protein uL3.